A 396-amino-acid chain; its full sequence is MAQLLDSPGFIERSAAVPHKAAAAPATRDAAAPAAVPGAAVSFELVGKVFDGPRGPAAALREVTLDIARGGVFGVIGRSGAGKSTLLRLVNGLERPTSGAVRVNGVDVGTLDERGLVALRRRIGMVFQHFNLLSAKTVAQNIGLPLKIAGVPKAERARKVDALLDLVGLAAKRDAYPASLSGGQKQRVGIARALVHDPALLLCDEATSALDPETTQSILALLADINRRLGLTIMLITHEMEVIRAVCDTVAVVEQGEVVETGPVWRVFGDPRHGATRALLRTLAHDLPADLAARLRPLDGAAPLPCGAQLLLDVRYTGASGGEPDLGALTAALARNVGDAVHFVHGGLDRIQGRVQGRLVIAASLAARGAASPDRIAAALAAARRHANRVEVLGYV.

Residues 41 to 280 (VSFELVGKVF…PRHGATRALL (240 aa)) enclose the ABC transporter domain. 77 to 84 (GRSGAGKS) serves as a coordination point for ATP.

The protein belongs to the ABC transporter superfamily. Methionine importer (TC 3.A.1.24) family. In terms of assembly, the complex is composed of two ATP-binding proteins (MetN), two transmembrane proteins (MetI) and a solute-binding protein (MetQ).

The protein resides in the cell inner membrane. It carries out the reaction L-methionine(out) + ATP + H2O = L-methionine(in) + ADP + phosphate + H(+). The catalysed reaction is D-methionine(out) + ATP + H2O = D-methionine(in) + ADP + phosphate + H(+). Functionally, part of the ABC transporter complex MetNIQ involved in methionine import. Responsible for energy coupling to the transport system. The polypeptide is Methionine import ATP-binding protein MetN 2 (Burkholderia pseudomallei (strain 1710b)).